Reading from the N-terminus, the 98-residue chain is Aspartyl/glutamyl-tRNA(Asn/Gln) amidotransferase subunit C (98 aa).

This sequence belongs to the GatC family. Heterotrimer of A, B and C subunits.

The catalysed reaction is L-glutamyl-tRNA(Gln) + L-glutamine + ATP + H2O = L-glutaminyl-tRNA(Gln) + L-glutamate + ADP + phosphate + H(+). It carries out the reaction L-aspartyl-tRNA(Asn) + L-glutamine + ATP + H2O = L-asparaginyl-tRNA(Asn) + L-glutamate + ADP + phosphate + 2 H(+). Allows the formation of correctly charged Asn-tRNA(Asn) or Gln-tRNA(Gln) through the transamidation of misacylated Asp-tRNA(Asn) or Glu-tRNA(Gln) in organisms which lack either or both of asparaginyl-tRNA or glutaminyl-tRNA synthetases. The reaction takes place in the presence of glutamine and ATP through an activated phospho-Asp-tRNA(Asn) or phospho-Glu-tRNA(Gln). This chain is Aspartyl/glutamyl-tRNA(Asn/Gln) amidotransferase subunit C, found in Acidothermus cellulolyticus (strain ATCC 43068 / DSM 8971 / 11B).